A 163-amino-acid polypeptide reads, in one-letter code: NADH-quinone oxidoreductase subunit I (163 aa).

2 4Fe-4S ferredoxin-type domains span residues 53–83 (LRRYPNGEERCIACKLCEAICPAQAITIEAG) and 94–123 (VRYDIDMVKCIYCGFCQEACPVDAIVEGPN). Residues Cys63, Cys66, Cys69, Cys73, Cys103, Cys106, Cys109, and Cys113 each coordinate [4Fe-4S] cluster.

It belongs to the complex I 23 kDa subunit family. NDH-1 is composed of 14 different subunits. Subunits NuoA, H, J, K, L, M, N constitute the membrane sector of the complex. [4Fe-4S] cluster serves as cofactor.

It localises to the cell inner membrane. The catalysed reaction is a quinone + NADH + 5 H(+)(in) = a quinol + NAD(+) + 4 H(+)(out). Functionally, NDH-1 shuttles electrons from NADH, via FMN and iron-sulfur (Fe-S) centers, to quinones in the respiratory chain. The immediate electron acceptor for the enzyme in this species is believed to be ubiquinone. Couples the redox reaction to proton translocation (for every two electrons transferred, four hydrogen ions are translocated across the cytoplasmic membrane), and thus conserves the redox energy in a proton gradient. The chain is NADH-quinone oxidoreductase subunit I from Brucella anthropi (strain ATCC 49188 / DSM 6882 / CCUG 24695 / JCM 21032 / LMG 3331 / NBRC 15819 / NCTC 12168 / Alc 37) (Ochrobactrum anthropi).